Here is a 125-residue protein sequence, read N- to C-terminus: Putative oxygen-evolving enhancer protein 2-2 (125 aa).

At serine 15 the chain carries Phosphoserine.

Belongs to the PsbP family.

The polypeptide is Putative oxygen-evolving enhancer protein 2-2 (PSBP2) (Arabidopsis thaliana (Mouse-ear cress)).